A 337-amino-acid polypeptide reads, in one-letter code: Phosphate acyltransferase (337 aa).

This sequence belongs to the PlsX family. As to quaternary structure, homodimer. Probably interacts with PlsY.

Its subcellular location is the cytoplasm. The enzyme catalyses a fatty acyl-[ACP] + phosphate = an acyl phosphate + holo-[ACP]. The protein operates within lipid metabolism; phospholipid metabolism. In terms of biological role, catalyzes the reversible formation of acyl-phosphate (acyl-PO(4)) from acyl-[acyl-carrier-protein] (acyl-ACP). This enzyme utilizes acyl-ACP as fatty acyl donor, but not acyl-CoA. The sequence is that of Phosphate acyltransferase from Aromatoleum aromaticum (strain DSM 19018 / LMG 30748 / EbN1) (Azoarcus sp. (strain EbN1)).